The chain runs to 392 residues: Ameloblastin (392 aa).

The N-terminal stretch at 1–26 (MPALKIPLFKMKDMILILCLLKMSSA) is a signal peptide. Pro37 bears the Hydroxyproline mark. At Ser43 the chain carries Phosphoserine. Disordered stretches follow at residues 86–109 (FPWMRPREHETQQPSLQPQQPGQK), 247–280 (TLEFDSPVAATKGPEKGEGGAQDSPVPEAHLADP), and 349–392 (TTLG…FQEP). Over residues 97 to 109 (QQPSLQPQQPGQK) the composition is skewed to low complexity. The span at 359–381 (VDSTATPDTQHTLMPRNKAQQPQ) shows a compositional bias: polar residues. Residues 382–392 (IKHDAWHFQEP) show a composition bias toward basic and acidic residues.

It belongs to the ameloblastin family.

The protein localises to the secreted. It is found in the extracellular space. Its subcellular location is the extracellular matrix. Functionally, involved in the mineralization and structural organization of enamel. The polypeptide is Ameloblastin (AMBN) (Bos taurus (Bovine)).